Here is a 64-residue protein sequence, read N- to C-terminus: DNA-binding protein 7 (64 aa).

N6-methyllysine occurs at positions 5 and 7.

The protein belongs to the 7 kDa DNA-binding/endoribonuclease P2 family. In terms of assembly, monomer.

It localises to the cytoplasm. Its function is as follows. Can constrain negative DNA supercoils. May be involved in maintaining the integrity of the genome at high temperature. This is DNA-binding protein 7 from Sulfurisphaera tokodaii (strain DSM 16993 / JCM 10545 / NBRC 100140 / 7) (Sulfolobus tokodaii).